Reading from the N-terminus, the 176-residue chain is Interleukin-20 (176 aa).

The N-terminal stretch at 1–24 (MKGFGLAFGLFSAVGFLLWTPLTG) is a signal peptide. Disulfide bonds link cysteine 33–cysteine 126, cysteine 80–cysteine 132, and cysteine 81–cysteine 134.

This sequence belongs to the IL-10 family. In terms of assembly, forms a 1:1:1 heterotrimeric complex with its primary high-affinity heterodimeric receptor IL20RA/IL20RB.

The protein resides in the secreted. Its function is as follows. Pro-inflammatory and angiogenic cytokine mainly secreted by monocytes and skin keratinocytes that plays crucial roles in immune responses, regulation of inflammatory responses, hemopoiesis, as well as epidermal cell and keratinocyte differentiation. Enhances tissue remodeling and wound-healing activities and restores the homeostasis of epithelial layers during infection and inflammatory responses to maintain tissue integrity. Affects multiple actin-mediated functions in activated neutrophils leading to inhibition of phagocytosis, granule exocytosis, and migration. Exert its effects via the type I IL-20 receptor complex consisting of IL20RA and IL20RB. Alternatively, can mediate its activity through a second receptor complex called type II IL-20 receptor complex composed of IL22RA1 and IL20RB. Acts as an arteriogenic and vascular remodeling factory by activating a range of signaling processes including phosphorylations of JAK2 and STAT5 as well as activation of the serine and threonine kinases AKT and ERK1/2. Alternatively, can activate STAT3 phosphorylation and transcriptional activity in a JAK2, ERK1/2 and p38 MAPK-dependent manner in keratinocytes. This Mus musculus (Mouse) protein is Interleukin-20 (Il20).